Consider the following 209-residue polypeptide: Small ribosomal subunit protein uS3 (209 aa).

Residues 38–107 (IRKVIKNKYA…RFIVNVEEIK (70 aa)) form the KH type-2 domain.

Belongs to the universal ribosomal protein uS3 family. As to quaternary structure, part of the 30S ribosomal subunit. Forms a tight complex with proteins S10 and S14.

Binds the lower part of the 30S subunit head. Binds mRNA in the 70S ribosome, positioning it for translation. This chain is Small ribosomal subunit protein uS3, found in Thermosipho africanus (strain TCF52B).